Consider the following 215-residue polypeptide: MQEPLRVPPSAPARLVVLASGTGSLLRSLLDAAVGDYPARVVAVGVDRECRAAEIAAEASVPVFTVRLADHPSRDAWDVAITAATAAHEPDLVVSAGFMRILGPQFLSRFYGRTLNTHPALLPAFPGTHGVADALAYGVKVTGATVHLVDAGTDTGPILAQQPVPVLDGDDEETLHERIKVTERRLLVAAVAALATHGVTVVGRTATMGRKVTIG.

Residues Arg74, 99-102 (MRIL), and Asn116 contribute to the (6R)-10-formyltetrahydrofolate site. The Proton donor role is filled by His118.

It belongs to the GART family.

The enzyme catalyses N(1)-(5-phospho-beta-D-ribosyl)glycinamide + (6R)-10-formyltetrahydrofolate = N(2)-formyl-N(1)-(5-phospho-beta-D-ribosyl)glycinamide + (6S)-5,6,7,8-tetrahydrofolate + H(+). It functions in the pathway purine metabolism; IMP biosynthesis via de novo pathway; N(2)-formyl-N(1)-(5-phospho-D-ribosyl)glycinamide from N(1)-(5-phospho-D-ribosyl)glycinamide (10-formyl THF route): step 1/1. Catalyzes the transfer of a formyl group from 10-formyltetrahydrofolate to 5-phospho-ribosyl-glycinamide (GAR), producing 5-phospho-ribosyl-N-formylglycinamide (FGAR) and tetrahydrofolate. This is Phosphoribosylglycinamide formyltransferase from Mycobacterium tuberculosis (strain CDC 1551 / Oshkosh).